The sequence spans 793 residues: Translocase of chloroplast 90, chloroplastic (793 aa).

Residues 22 to 59 (LGSDPFFRDPHQEQDNHSQAPAAPQPVTLSEPPCSTSS) are disordered. Residues 27–37 (FFRDPHQEQDN) show a composition bias toward basic and acidic residues. The stretch at 130–157 (LIRAEESELKNVKLRQDRAKALAREQES) forms a coiled coil. In terms of domain architecture, AIG1-type G spans 164–394 (DFSLRILVLG…FRDSIGLGQP (231 aa)). A G1 region spans residues 173–180 (GKTGVGKS). GTP contacts are provided by residues 176 to 181 (GVGKSA) and 195 to 200 (DAFRPG). Residue serine 180 participates in Mg(2+) binding. The segment at 195 to 198 (DAFR) is homodimerization. Residues 199-203 (PGTDR) are G2. Positions 220–223 (DTPG) are G3. Positions 259–264 (RLDMID) are homodimerization. A helical transmembrane segment spans residues 279–297 (IFGAAIWLNTILVMTHSAA). The segment at 293-296 (THSA) is G4. GTP contacts are provided by residues histidine 294 and 341-342 (EN). The G5 stretch occupies residues 341 to 343 (ENH). 2 coiled-coil regions span residues 410 to 442 (LRRR…YDQL) and 477 to 503 (KKQL…DTEQ).

This sequence belongs to the TRAFAC class TrmE-Era-EngA-EngB-Septin-like GTPase superfamily. AIG1/Toc34/Toc159-like paraseptin GTPase family. TOC159 subfamily. In terms of assembly, homodimer. Part of the TOC core complex that includes 1 protein for the specific recognition of transit peptides surrounded by a ring composed of four proteins forming translocation channels, and four to five GTP-binding proteins providing energy. This core complex can interact with components of the TIC complex to form a larger import complex. Chloroplastic protein precursor such as prSS (precursor of the RuBisCO small subunit) interacts with these complexes. The TOC complex contains a specific subset of polar lipids such as digalactosyldiacylglyceride (DGDG), phosphatidylcholine (PC) and phosphatidylglycerol (PG). Interacts with TOC33 and TOC75. The cofactor is Mg(2+). As to expression, expressed in seedlings, leaves, flowers, and roots.

The protein resides in the plastid. The protein localises to the chloroplast outer membrane. Its subcellular location is the cytoplasm. Its function is as follows. GTPase involved in protein precursor import into chloroplasts. Seems to recognize chloroplast-destined precursor proteins and regulate their presentation to the translocation channel through GTP hydrolysis. Probably specialized in the import of nuclear encoded photosynthetic preproteins from the cytoplasm to the chloroplast. In Arabidopsis thaliana (Mouse-ear cress), this protein is Translocase of chloroplast 90, chloroplastic (TOC90).